The primary structure comprises 680 residues: Tumor protein 63 (680 aa).

Residues 1–107 (MNFETSRCAT…MQDSDLSDPM (107 aa)) form a transcription activation region. The span at 122 to 157 (QQIQNGSSSTSPYNTDHAQNSVTAPSPYAQPSSTFD) shows a compositional bias: polar residues. The disordered stretch occupies residues 122-171 (QQIQNGSSSTSPYNTDHAQNSVTAPSPYAQPSSTFDALSPSPAIPSNTDY). A DNA-binding region spans residues 170–362 (DYPGPHSFDV…KADEDSIRKQ (193 aa)). Zn(2+) contacts are provided by C244, H247, C308, and C312. A compositionally biased stretch (basic and acidic residues) spans 351–360 (DRKADEDSIR). Disordered regions lie at residues 351–393 (DRKA…IKKR) and 436–472 (RQQQQQQHQHLLQKQTSMQSQSSYGNSSPPLNKMNSM). The interaction with HIPK2 stretch occupies residues 352–388 (RKADEDSIRKQQVSDSAKNGDGTKRPFRQNTHGIQMT). Over residues 379–389 (RQNTHGIQMTS) the composition is skewed to polar residues. The segment at 394–443 (RSPDDELLYLPVRGRETYEMLLKIKESLELMQYLPQHTIETYRQQQQQQH) is oligomerization. Low complexity predominate over residues 437–463 (QQQQQQHQHLLQKQTSMQSQSSYGNSS). Positions 541 to 607 (PPYPTDCSIV…WKGILDHRQL (67 aa)) constitute an SAM domain. A transactivation inhibition region spans residues 610–680 (FSSPPHLLRT…KQQRIKEEGE (71 aa)). Residue K676 forms a Glycyl lysine isopeptide (Lys-Gly) (interchain with G-Cter in SUMO) linkage.

It belongs to the p53 family. In terms of assembly, binds DNA as a homotetramer. Isoform composition of the tetramer may determine transactivation activity. Interacts with HIPK2. Interacts with SSRP1, leading to stimulate coactivator activity. Interacts with WWP1. Interacts with PDS5A. Interacts (via activation domain) with NOC2L. Requires Zn(2+) as cofactor. May be sumoylated. In terms of processing, ubiquitinated. Polyubiquitination involves WWP1 and leads to proteasomal degradation of this protein. In terms of tissue distribution, widely expressed, notably in thymus, prostate, placenta, and skeletal muscle, although the precise isoform varies according to tissue type. Progenitor cell layers of skin, breast and prostate express high levels of DeltaN-type isoforms.

The protein resides in the nucleus. Its function is as follows. Acts as a sequence specific DNA binding transcriptional activator or repressor. The isoforms contain a varying set of transactivation and auto-regulating transactivation inhibiting domains thus showing an isoform specific activity. May be required in conjunction with TP73/p73 for initiation of p53/TP53 dependent apoptosis in response to genotoxic insults and the presence of activated oncogenes. Involved in Notch signaling by probably inducing JAG1 and JAG2. Activates RIPK4 transcription. Plays a role in the regulation of epithelial morphogenesis. The ratio of DeltaN-type and TA*-type isoforms may govern the maintenance of epithelial stem cell compartments and regulate the initiation of epithelial stratification from the undifferentiated embryonal ectoderm. Required for limb formation from the apical ectodermal ridge. Activates transcription of the p21 promoter. This chain is Tumor protein 63 (Tp63), found in Rattus norvegicus (Rat).